A 118-amino-acid polypeptide reads, in one-letter code: Peptidyl-tRNA hydrolase (118 aa).

The protein belongs to the PTH2 family.

The protein resides in the cytoplasm. It catalyses the reaction an N-acyl-L-alpha-aminoacyl-tRNA + H2O = an N-acyl-L-amino acid + a tRNA + H(+). The natural substrate for this enzyme may be peptidyl-tRNAs which drop off the ribosome during protein synthesis. This is Peptidyl-tRNA hydrolase from Thermococcus sibiricus (strain DSM 12597 / MM 739).